A 166-amino-acid polypeptide reads, in one-letter code: MAIRYVRKIGDEVLRKKAKPVTEINSHILTILEDMAQTMYLNDGVGLAANQIGVLRRLVVIDVGEGLLELINPEIVYEEGEQVGAEGCLSIPGVVGEVKRPKKVKVKYLDREGKEREIEGEDLLARALCHEIDHLNGVLFIDKAIRFLDEEEKEQVKYFGNMSRGW.

The Fe cation site is built by C88 and H130. E131 is a catalytic residue. Fe cation is bound at residue H134.

The protein belongs to the polypeptide deformylase family. The cofactor is Fe(2+).

It carries out the reaction N-terminal N-formyl-L-methionyl-[peptide] + H2O = N-terminal L-methionyl-[peptide] + formate. In terms of biological role, removes the formyl group from the N-terminal Met of newly synthesized proteins. Requires at least a dipeptide for an efficient rate of reaction. N-terminal L-methionine is a prerequisite for activity but the enzyme has broad specificity at other positions. The sequence is that of Peptide deformylase from Thermoanaerobacter sp. (strain X514).